The primary structure comprises 174 residues: ATP-dependent protease subunit HslV (174 aa).

Thr2 is an active-site residue. Positions 157, 160, and 163 each coordinate Na(+).

It belongs to the peptidase T1B family. HslV subfamily. As to quaternary structure, a double ring-shaped homohexamer of HslV is capped on each side by a ring-shaped HslU homohexamer. The assembly of the HslU/HslV complex is dependent on binding of ATP.

It is found in the cytoplasm. It carries out the reaction ATP-dependent cleavage of peptide bonds with broad specificity.. Allosterically activated by HslU binding. Functionally, protease subunit of a proteasome-like degradation complex believed to be a general protein degrading machinery. This Cellvibrio japonicus (strain Ueda107) (Pseudomonas fluorescens subsp. cellulosa) protein is ATP-dependent protease subunit HslV.